A 239-amino-acid polypeptide reads, in one-letter code: Pyridoxine 5'-phosphate synthase (239 aa).

Residue Asn7 coordinates 3-amino-2-oxopropyl phosphate. Position 9-10 (9-10 (DH)) interacts with 1-deoxy-D-xylulose 5-phosphate. Residue Arg18 participates in 3-amino-2-oxopropyl phosphate binding. The active-site Proton acceptor is His43. Arg45 and His50 together coordinate 1-deoxy-D-xylulose 5-phosphate. Residue Glu70 is the Proton acceptor of the active site. Thr100 lines the 1-deoxy-D-xylulose 5-phosphate pocket. His191 acts as the Proton donor in catalysis. Residues Gly192 and 213-214 (GH) contribute to the 3-amino-2-oxopropyl phosphate site.

Belongs to the PNP synthase family. Homooctamer; tetramer of dimers.

It is found in the cytoplasm. It carries out the reaction 3-amino-2-oxopropyl phosphate + 1-deoxy-D-xylulose 5-phosphate = pyridoxine 5'-phosphate + phosphate + 2 H2O + H(+). It participates in cofactor biosynthesis; pyridoxine 5'-phosphate biosynthesis; pyridoxine 5'-phosphate from D-erythrose 4-phosphate: step 5/5. Catalyzes the complicated ring closure reaction between the two acyclic compounds 1-deoxy-D-xylulose-5-phosphate (DXP) and 3-amino-2-oxopropyl phosphate (1-amino-acetone-3-phosphate or AAP) to form pyridoxine 5'-phosphate (PNP) and inorganic phosphate. The protein is Pyridoxine 5'-phosphate synthase of Geotalea daltonii (strain DSM 22248 / JCM 15807 / FRC-32) (Geobacter daltonii).